The sequence spans 104 residues: U20-lycotoxin-Ls1a (104 aa).

The signal sequence occupies residues 1-30 (MFSTSDQVSKMNSRILSALLILGIATCVIA). One can recognise a WAP domain in the interval 31–76 (GGFCPKSRHPQCNLSYKINDCCAQSDCRVGSVCCVEGCGNVCRAES). 5 disulfides stabilise this stretch: cysteine 34/cysteine 64, cysteine 42/cysteine 68, cysteine 51/cysteine 63, cysteine 52/cysteine 90, and cysteine 57/cysteine 72.

It belongs to the venom protein 11 family. 02 (wap-2) subfamily. Contains 5 disulfide bonds. In terms of tissue distribution, expressed by the venom gland.

The protein localises to the secreted. In terms of biological role, has antibacterial activity. The polypeptide is U20-lycotoxin-Ls1a (Lycosa singoriensis (Wolf spider)).